We begin with the raw amino-acid sequence, 746 residues long: tRNA (cytosine(34)-C(5))-methyltransferase (746 aa).

A disordered region spans residues 1 to 30 (MGRNQKQNFFAARKRQKRENGPKRTDRQAQ). A compositionally biased stretch (basic and acidic residues) spans 18-30 (RENGPKRTDRQAQ). Residues 184 to 190 (CAAPGSK), Asp-216, Asp-243, and Asp-270 each bind S-adenosyl-L-methionine. Cys-323 (nucleophile) is an active-site residue. Disordered stretches follow at residues 454–475 (QPAAEPQVDADGKPIEEKSVPW) and 701–746 (SAEA…VATS). Over residues 463-472 (ADGKPIEEKS) the composition is skewed to basic and acidic residues. A compositionally biased stretch (acidic residues) spans 704 to 714 (AEADSSGDGDA). Residues 731–746 (AETTGTPMDTEVVATS) are compositionally biased toward polar residues.

The protein belongs to the class I-like SAM-binding methyltransferase superfamily. RsmB/NOP family. TRM4 subfamily. In terms of tissue distribution, ubiquitously expressed during embryonic development. Some enrichment is observed in the proventriculus area of the foregut and in the hindgut.

It localises to the nucleus. The protein localises to the nucleolus. It catalyses the reaction cytidine(34) in tRNA precursor + S-adenosyl-L-methionine = 5-methylcytidine(34) in tRNA precursor + S-adenosyl-L-homocysteine + H(+). Functionally, RNA methyltransferase that methylates tRNAs. Methylates cytosine to 5-methylcytosine (m5C) at position 34 of intron-containing tRNA(Leu)(CAA) precursors. Required for short-term memory. The protein is tRNA (cytosine(34)-C(5))-methyltransferase of Drosophila melanogaster (Fruit fly).